A 322-amino-acid chain; its full sequence is Probable F-box protein At1g60180 (322 aa).

One can recognise an F-box domain in the interval 45-88 (FCELSDECIAKILSGCPILESLTLSHCIYLTVLDLSKSLRLRTL).

This chain is Probable F-box protein At1g60180, found in Arabidopsis thaliana (Mouse-ear cress).